The sequence spans 679 residues: DNA ligase (679 aa).

Residues 36–40 (DAQYD), 85–86 (SL), and Glu-116 contribute to the NAD(+) site. Lys-118 serves as the catalytic N6-AMP-lysine intermediate. NAD(+) contacts are provided by Arg-139, Glu-174, Lys-300, and Lys-324. Residues Cys-418, Cys-421, Cys-436, and Cys-441 each contribute to the Zn(2+) site. Residues 600–679 (EGGGPLNGKV…NEFRELTGRK (80 aa)) enclose the BRCT domain.

It belongs to the NAD-dependent DNA ligase family. LigA subfamily. Requires Mg(2+) as cofactor. Mn(2+) serves as cofactor.

It carries out the reaction NAD(+) + (deoxyribonucleotide)n-3'-hydroxyl + 5'-phospho-(deoxyribonucleotide)m = (deoxyribonucleotide)n+m + AMP + beta-nicotinamide D-nucleotide.. In terms of biological role, DNA ligase that catalyzes the formation of phosphodiester linkages between 5'-phosphoryl and 3'-hydroxyl groups in double-stranded DNA using NAD as a coenzyme and as the energy source for the reaction. It is essential for DNA replication and repair of damaged DNA. The sequence is that of DNA ligase from Pelotomaculum thermopropionicum (strain DSM 13744 / JCM 10971 / SI).